Reading from the N-terminus, the 278-residue chain is ATP synthase subunit a (278 aa).

A run of 6 helical transmembrane segments spans residues 41-61 (FLNIDSLFFSFFLGIIFLLFF), 108-128 (LTIFVWLFLMNLMDLIPVDFV), 149-168 (INITLSMSLGVFLLILYFGI), 180-200 (FFFQPFNNYLLIPVNLVLELI), 222-242 (LIFILISGLLPWWLQWILSVP), and 244-264 (AIFHILIIILQAFIFMILTII).

It belongs to the ATPase A chain family. In terms of assembly, F-type ATPases have 2 components, CF(1) - the catalytic core - and CF(0) - the membrane proton channel. CF(1) has five subunits: alpha(3), beta(3), gamma(1), delta(1), epsilon(1). CF(0) has three main subunits: a(1), b(2) and c(9-12). The alpha and beta chains form an alternating ring which encloses part of the gamma chain. CF(1) is attached to CF(0) by a central stalk formed by the gamma and epsilon chains, while a peripheral stalk is formed by the delta and b chains.

It is found in the cell membrane. In terms of biological role, key component of the proton channel; it plays a direct role in the translocation of protons across the membrane. The chain is ATP synthase subunit a from Wigglesworthia glossinidia brevipalpis.